The primary structure comprises 940 residues: Vacuolar protein sorting-associated protein 54 (940 aa).

Position 30 is a phosphothreonine (Thr-30). Residues 192-218 (QQLERDKPLENGAQGAPGPGTGGQTPT) form a disordered region. Residues 299–325 (HAILAEMEQAADQVRQLRAALAELHSH) adopt a coiled-coil conformation.

The protein belongs to the VPS54 family.

Its subcellular location is the golgi apparatus. The protein localises to the trans-Golgi network. Its function is as follows. May be involved in retrograde transport from early and late endosomes to late Golgi. Required during spermatogenesis for sperm individualization. The polypeptide is Vacuolar protein sorting-associated protein 54 (scat) (Drosophila melanogaster (Fruit fly)).